We begin with the raw amino-acid sequence, 121 residues long: uncharacterized protein (121 aa).

This is an uncharacterized protein from Escherichia coli (strain K12).